The following is a 143-amino-acid chain: Crossover junction endodeoxyribonuclease Hjc (143 aa).

Glu-12 is a Mg(2+) binding site. The active site involves Ser-32. Residues Asp-42 and Glu-55 each contribute to the Mg(2+) site.

Belongs to the Holliday junction resolvase Hjc family. In terms of assembly, homodimer. Interacts with PCNA subunit PCNA1. Mg(2+) is required as a cofactor.

It carries out the reaction Endonucleolytic cleavage at a junction such as a reciprocal single-stranded crossover between two homologous DNA duplexes (Holliday junction).. Autoinhibits at very high concentrations, possibly because of extreme junction distortion. Inhibition (and activity at low concentrations of enzyme) is stimulated by dsDNA and Sso7d. Activity stimulated by PCNA subunit PCNA1. In terms of biological role, a structure-specific endonuclease that resolves Holliday junction (HJ) intermediates during genetic recombination; may have some degree of sequence preference in a mobile junction. Cleaves 4-way DNA junctions introducing paired nicks in opposing strands, leaving a 5'-terminal phosphate and a 3'-terminal hydroxyl group that are subsequently ligated to produce recombinant products. Can cleave all 4 strands 3 bases 3' of the junction center. Cleaves both mobile and immobile junctions. Modifies the structure of the 4-way DNA junction, a model Holliday junction structure. The protein forms multiple complexes with 4-way DNA, suggesting more than 1 homodimer can bind to each junction. This is Crossover junction endodeoxyribonuclease Hjc from Saccharolobus solfataricus (strain ATCC 35092 / DSM 1617 / JCM 11322 / P2) (Sulfolobus solfataricus).